The chain runs to 111 residues: Ribulose bisphosphate carboxylase small subunit (111 aa).

Belongs to the RuBisCO small chain family. In terms of assembly, heterohexadecamer of 8 large and 8 small subunits. The CcmM short form purifies from carboxysomes in complex with both RuBisCO subunits; a second complex with full-length CcmM and RuBisCO also includes carbonic anhydrase (CA, ccaA). RuBisCO-CcmM complexes are probably associated with the carboxysome shell. Isolated reduced and oxidized SSUL1 binds holo-RuBisCO (RbcL(8)-RbcS(8)) but not either subunit octamer alone; RuBisCO has a higher affinity for reduced SSUL1.

It localises to the carboxysome. In terms of biological role, ruBisCO catalyzes two reactions: the carboxylation of D-ribulose 1,5-bisphosphate, the primary event in carbon dioxide fixation, as well as the oxidative fragmentation of the pentose substrate in the photorespiration process. Both reactions occur simultaneously and in competition at the same active site. Functionally, beta-carboxysome assembly initiates when soluble RuBisCO aggregates is condensed into a liquid matrix in a pre-carboxysome by the RbcS-like domains of probably both CcmM58 and CcmM35. CcmN interacts with the N-terminus of CcmM58, and then recruits the CcmK2 major shell protein via CcmN's encapsulation peptide. Shell formation requires CcmK proteins and CcmO. CcmL caps the otherwise elongated carboxysome. Once fully encapsulated carboxysomes are formed, they migrate within the cell probably via interactions with the cytoskeleton. This chain is Ribulose bisphosphate carboxylase small subunit, found in Synechococcus elongatus (strain ATCC 33912 / PCC 7942 / FACHB-805) (Anacystis nidulans R2).